A 603-amino-acid polypeptide reads, in one-letter code: Proline--tRNA ligase (603 aa).

It belongs to the class-II aminoacyl-tRNA synthetase family. ProS type 1 subfamily. In terms of assembly, homodimer.

Its subcellular location is the cytoplasm. It carries out the reaction tRNA(Pro) + L-proline + ATP = L-prolyl-tRNA(Pro) + AMP + diphosphate. Catalyzes the attachment of proline to tRNA(Pro) in a two-step reaction: proline is first activated by ATP to form Pro-AMP and then transferred to the acceptor end of tRNA(Pro). As ProRS can inadvertently accommodate and process non-cognate amino acids such as alanine and cysteine, to avoid such errors it has two additional distinct editing activities against alanine. One activity is designated as 'pretransfer' editing and involves the tRNA(Pro)-independent hydrolysis of activated Ala-AMP. The other activity is designated 'posttransfer' editing and involves deacylation of mischarged Ala-tRNA(Pro). The misacylated Cys-tRNA(Pro) is not edited by ProRS. This chain is Proline--tRNA ligase, found in Synechocystis sp. (strain ATCC 27184 / PCC 6803 / Kazusa).